A 78-amino-acid polypeptide reads, in one-letter code: Probable [Fe-S]-dependent transcriptional repressor (78 aa).

Iron-sulfur cluster-binding residues include Cys-56, Cys-61, Cys-64, and Cys-70.

It belongs to the FeoC family.

May function as a transcriptional regulator that controls feoABC expression. The protein is Probable [Fe-S]-dependent transcriptional repressor of Escherichia coli O7:K1 (strain IAI39 / ExPEC).